The chain runs to 256 residues: Fructose-1,6-bisphosphatase/inositol-1-monophosphatase (256 aa).

Residues E67, D83, L85, and D86 each contribute to the Mg(2+) site. Substrate contacts are provided by residues 86–88 (DGS), R170, I175, and R194. D201 lines the Mg(2+) pocket.

This sequence belongs to the inositol monophosphatase superfamily. FBPase class 4 family. Homodimer. It depends on Mg(2+) as a cofactor.

It carries out the reaction beta-D-fructose 1,6-bisphosphate + H2O = beta-D-fructose 6-phosphate + phosphate. The catalysed reaction is a myo-inositol phosphate + H2O = myo-inositol + phosphate. Its function is as follows. Phosphatase with broad specificity; it can dephosphorylate fructose 1,6-bisphosphate (FBP) and inositol-1-phosphate (IMP). However, while possessing a high FBPase activity in vitro, does not participate in gluconeogenesis in vivo. The polypeptide is Fructose-1,6-bisphosphatase/inositol-1-monophosphatase (suhB) (Thermococcus kodakarensis (strain ATCC BAA-918 / JCM 12380 / KOD1) (Pyrococcus kodakaraensis (strain KOD1))).